A 324-amino-acid polypeptide reads, in one-letter code: Meiotic recombination protein DLH1 (324 aa).

An ATP-binding site is contributed by 112–119 (GEFRCGKT). R214 provides a ligand contact to dsDNA. Residues R214, Y217, R220, R226, and R296 each coordinate ssDNA. 2 residues coordinate dsDNA: R220 and R226.

It belongs to the RecA family. DMC1 subfamily. As to quaternary structure, double stacked ring-shaped homooctamer.

Its subcellular location is the nucleus. In terms of biological role, required for meiotic recombination, synaptonemal complex formation and cell cycle progression. In Candida albicans (Yeast), this protein is Meiotic recombination protein DLH1 (DLH1).